A 655-amino-acid chain; its full sequence is Protein movement modulator (655 aa).

The Extracellular portion of the chain corresponds to 1-54; it reads MEQPSILVKILHSIPHVNYTFRRVNDTFNPDSDVYLEPTNNKLQCQQKGIELQS. Residues asparagine 18 and asparagine 25 are each glycosylated (N-linked (GlcNAc...) asparagine). The chain crosses the membrane as a helical span at residues 55-75; the sequence is LVILASIPAGLLIGSLLGLLL. Topologically, residues 76–95 are cytoplasmic; the sequence is YLLTRCCDRRQRKPSAQRCQ. The chain crosses the membrane as a helical span at residues 96–116; the sequence is SCSLVIITLMTCAAIGLGLYG. Residues 117-231 are Extracellular-facing; the sequence is NDDFHNGLLQ…GEFYESIRWP (115 aa). Asparagine 171, asparagine 188, and asparagine 211 each carry an N-linked (GlcNAc...) asparagine glycan. A helical membrane pass occupies residues 232-252; sequence ATLAFLTVLLLLCTVLVIGVA. Topologically, residues 253–258 are cytoplasmic; sequence RRSRCT. A helical membrane pass occupies residues 259–279; it reads LIFFSVSGLFCIIICWLLAGV. Residues 280-401 lie on the Extracellular side of the membrane; that stretch reads YLASSVAAGD…ALRGLCGGGL (122 aa). Residues asparagine 326 and asparagine 372 are each glycosylated (N-linked (GlcNAc...) asparagine). Residues 402 to 422 form a helical membrane-spanning segment; the sequence is LGLSLMMVAGLLTSFLLTILV. The Cytoplasmic segment spans residues 423-655; sequence YADSHAWIYL…CKTLESNDFY (233 aa). Positions 446-576 are disordered; that stretch reads APLFPASNAP…NNHYNNTQHR (131 aa). Residues 450–464 show a composition bias toward low complexity; the sequence is PASNAPSASISPTAP. The segment covering 465–480 has biased composition (polar residues); that stretch reads LSTGTINRTLLHHQQA. Over residues 482 to 509 the composition is skewed to gly residues; it reads SGGGSGTLPGSGGGAGAGGGVGANGHNG. Composition is skewed to low complexity over residues 526–539 and 546–576; these read SPSS…STAT and SYHN…TQHR. Serine 597 and serine 599 each carry phosphoserine.

It belongs to the tweety family.

It localises to the cell membrane. It catalyses the reaction chloride(in) = chloride(out). Functionally, probable large-conductance Ca(2+)-activated chloride channel. Modulator of embryonic movement. The sequence is that of Protein movement modulator from Drosophila melanogaster (Fruit fly).